Here is a 51-residue protein sequence, read N- to C-terminus: MSRNKPLAKKLRMAKANKQNRRIPIWAYAKTNRKLRYRPKPRHWRRNSLKL.

Belongs to the eukaryotic ribosomal protein eL39 family.

This chain is Large ribosomal subunit protein eL39, found in Methanobrevibacter smithii (strain ATCC 35061 / DSM 861 / OCM 144 / PS).